Here is a 251-residue protein sequence, read N- to C-terminus: Putative integrase/recombinase y4eF (251 aa).

The 40-residue stretch at 1–40 (MLGREDIRTYQVYLANEKKLAPGSIHIALSALRFFFNVTL) folds into the Core-binding (CB) domain. The 174-residue stretch at 58 to 231 (KLPIILSPDE…ATNKVCATES (174 aa)) folds into the Tyr recombinase domain. Residues R93, K118, H183, R186, and H209 contribute to the active site. Y218 serves as the catalytic O-(3'-phospho-DNA)-tyrosine intermediate.

The protein belongs to the 'phage' integrase family.

The sequence is that of Putative integrase/recombinase y4eF from Sinorhizobium fredii (strain NBRC 101917 / NGR234).